Reading from the N-terminus, the 364-residue chain is Putative galactoside 2-alpha-L-fucosyltransferase svh-11 (364 aa).

The Cytoplasmic segment spans residues 1–19 (MRLFHFLKFLTINNFSRYC). Residues 20-42 (LKIVKVHIIWITIICIIYFNWRF) form a helical; Signal-anchor for type II membrane protein membrane-spanning segment. Over 43–364 (KKLDFMAIPY…SANSFTVVRS (322 aa)) the chain is Lumenal. Asparagine 60 and asparagine 128 each carry an N-linked (GlcNAc...) asparagine glycan.

The protein belongs to the glycosyltransferase 11 family.

It is found in the golgi apparatus. The protein resides in the golgi stack membrane. Its function is as follows. Mediates the transfer of fucose to the terminal galactose on glycan chains of cell surface glycoproteins and glycolipids. Required for axon regeneration after injury. This is Putative galactoside 2-alpha-L-fucosyltransferase svh-11 from Caenorhabditis elegans.